The sequence spans 543 residues: Lysosomal cobalamin transport escort protein LMBD1 (543 aa).

At 1–12 (MAAAAAGAASAE) the chain is on the extracellular side. The helical transmembrane segment at 13 to 33 (LVIGWCIFGLLLLAILAFCWI) threads the bilayer. Residues 34–52 (YVRKYQSQRESEVVSTITA) are Cytoplasmic-facing. A helical membrane pass occupies residues 53–73 (IFSLAIALITSALLPVDIFLV). Over 74–102 (SYMKNQNGTFKDWANGNVSRQIEDTVLYG) the chain is Extracellular. N-linked (GlcNAc...) asparagine glycans are attached at residues asparagine 80 and asparagine 90. A helical transmembrane segment spans residues 103–123 (YYTLYSVILFCVFFWIPFVYF). Residues 124-146 (YYEEKDDDDTGKCTQVKMALKYT) lie on the Cytoplasmic side of the membrane. The chain crosses the membrane as a helical span at residues 147-167 (LGFVVICALLLLVGAFVPLNL). Residues 168–190 (PDNKNSTEWEKVKFLFEELGSSH) lie on the Extracellular side of the membrane. Residue asparagine 172 is glycosylated (N-linked (GlcNAc...) asparagine). The helical transmembrane segment at 191-211 (GLAALSFSISSLTLVGMLAAI) threads the bilayer. Residues 212-307 (IYTAYGMSAL…KFCGALRPLK (96 aa)) are Cytoplasmic-facing. A YERL motif; mediates interaction with adapter protein complex 2 and is essential for its function in clathrin-mediated endocytosis of INSR motif is present at residues 234–237 (YERL). Threonine 240 is modified (phosphothreonine). The WTKF motif; mediates interaction with adapter protein complex 2 and is essential for its function in clathrin-mediated endocytosis of INSR signature appears at 296-299 (WTKF). A helical transmembrane segment spans residues 308–328 (IIWGIFFIFVALLFVISLFLS). Over 329–366 (NLDKALHSAGIDSGFIIFGANLSNPLNMLLPLLQTVFP) the chain is Extracellular. A glycan (N-linked (GlcNAc...) asparagine) is linked at asparagine 349. A helical transmembrane segment spans residues 367–387 (LDYILITIIIMYFIFTSMAGI). Topologically, residues 388–410 (RNIGIWFFWIRLYKIRRGRTRPQ) are cytoplasmic. Residues 411–431 (ALLFLCMILLLIVLHTSYMIY) form a helical membrane-spanning segment. Residues 432 to 488 (SLAPQYVMYGSQNYLIESNMTYNDHRGNSSLSVPKRCDADAPEDQCTVTRTYLFLHK) lie on the Extracellular side of the membrane. N-linked (GlcNAc...) asparagine glycosylation is found at asparagine 450 and asparagine 459. A helical transmembrane segment spans residues 489–509 (FWFFSAAYYFGNWAFLGVFIV). The Cytoplasmic segment spans residues 510 to 543 (GFIVSCCKGKKSVLERVDEDDSDLSDDEPSLYSV). A phosphoserine mark is found at serine 531 and serine 534.

This sequence belongs to the LIMR family. LMBRD1 subfamily. As to quaternary structure, interacts with ABCD4; this interaction induces the translocation of ABCD4 from the endoplasmic reticulum to the lysosome. Interacts with ABCD4 and MMACHC; this interaction ensures the transport of cobalamin from the lysosome to the cytoplasm. Interacts with INSR, adapter protein complex 2 and clathrin heavy chain. In terms of processing, N-glycosylated.

Its subcellular location is the endoplasmic reticulum membrane. It localises to the lysosome membrane. The protein localises to the cell membrane. The protein resides in the cytoplasmic vesicle. It is found in the clathrin-coated vesicle. In terms of biological role, lysosomal membrane chaperone required to export cobalamin (vitamin B12) from the lysosome to the cytosol, allowing its conversion to cofactors. Targets ABCD4 transporter from the endoplasmic reticulum to the lysosome. Then forms a complex with lysosomal ABCD4 and cytoplasmic MMACHC to transport cobalamin across the lysosomal membrane. Acts as an adapter protein which plays an important role in mediating and regulating the internalization of the insulin receptor (INSR). Involved in clathrin-mediated endocytosis of INSR via its interaction with adapter protein complex 2. Essential for the initiation of gastrulation and early formation of mesoderm structures during embryogenesis. The protein is Lysosomal cobalamin transport escort protein LMBD1 (LMBRD1) of Bos taurus (Bovine).